Reading from the N-terminus, the 426-residue chain is Serine--tRNA ligase (426 aa).

Residue 231-233 (TAE) participates in L-serine binding. An ATP-binding site is contributed by 262–264 (RSE). E285 contacts L-serine. An ATP-binding site is contributed by 349 to 352 (EISS). L-serine is bound at residue S385.

This sequence belongs to the class-II aminoacyl-tRNA synthetase family. Type-1 seryl-tRNA synthetase subfamily. Homodimer. The tRNA molecule binds across the dimer.

Its subcellular location is the cytoplasm. The enzyme catalyses tRNA(Ser) + L-serine + ATP = L-seryl-tRNA(Ser) + AMP + diphosphate + H(+). It catalyses the reaction tRNA(Sec) + L-serine + ATP = L-seryl-tRNA(Sec) + AMP + diphosphate + H(+). Its pathway is aminoacyl-tRNA biosynthesis; selenocysteinyl-tRNA(Sec) biosynthesis; L-seryl-tRNA(Sec) from L-serine and tRNA(Sec): step 1/1. In terms of biological role, catalyzes the attachment of serine to tRNA(Ser). Is also able to aminoacylate tRNA(Sec) with serine, to form the misacylated tRNA L-seryl-tRNA(Sec), which will be further converted into selenocysteinyl-tRNA(Sec). The polypeptide is Serine--tRNA ligase (Brevibacillus brevis (strain 47 / JCM 6285 / NBRC 100599)).